The chain runs to 256 residues: Short-chain dehydrogenase/reductase cdmF (256 aa).

NADP(+)-binding residues include Val11, Asp57, and Arg119. Ser137 serves as the catalytic Proton donor. NADP(+) contacts are provided by Tyr151, Lys155, Gly183, and Asn187. Residue Tyr151 is the Proton acceptor of the active site. Lys155 serves as the catalytic Lowers pKa of active site Tyr.

This sequence belongs to the short-chain dehydrogenases/reductases (SDR) family.

It catalyses the reaction 3-hydroxypentacecilide A + A = chrodrimanin C + AH2. It carries out the reaction chrodrimanin F + A = chrodrimanin H + AH2. The protein operates within secondary metabolite biosynthesis; terpenoid biosynthesis. Functionally, short-chain dehydrogenase/reductase; part of the gene cluster that mediates the biosynthesis of chrodrimanin B, a meroterpenoid that acts as a potent blocker of insect GABA-gated chloride channels. The first step of the pathway is the biosynthesis of 6-hydroxymellein by the polyketide synthase cdmE. The prenyltransferase cdmH acts as a 6-hydroxymellein 5-farnesyltransferase and produces the hydrophobic metabolite verruculide C. The FAD-dependent monooxygenase cdmI further converts verruculide C into verruculide B. The terpene cyclase cdmG then produced the pentacyclic molecule 3-hydroxypentacecilide A, the backbone structure of chrodrimanin B, via folding the farnesyl moiety of the substrate into the chair-boat conformation. The short-chain dehydrogenase/reductase cdmF functions as the 3-OH dehydrogenase that oxidizes the C-3 hydroxyl group of 3-hydroxypentacecilide A and produces chrodrimanin C, the dehydrogenated product of 3-hydroxypentacecilide A. The cytochrome P450 monooxygenase cdmJ then accepts both 3-hydroxypentacecilide A and chrodrimanin C and functions as a C-7-beta-hydroxylase to produce respectively chrodrimanin H and chrodrimanin F. The dioxygenase cdmA accepts chrodrimanin H to afford chrodrimanin E, which is further transformed to chrodrimanin A by the dioxygenase cdmD. CdmA can also accept chrodrimanin C as substrate to convert it into verruculide A, which is further converted into chrodrimanin T by cdmD. The last step of the biosynthesis is proposed to be performed by the acetyltransferase cdmC which acetylates chrodrimanin A to yield chrodrimanin B. The pathway may also lead to the production of additional shunt products, including chrodrimanins T and U. This Talaromyces verruculosus (Penicillium verruculosum) protein is Short-chain dehydrogenase/reductase cdmF.